A 225-amino-acid polypeptide reads, in one-letter code: Ribosomal RNA large subunit methyltransferase E (225 aa).

S-adenosyl-L-methionine is bound by residues Gly-76, Trp-78, Asp-99, Asp-115, and Asp-139. The active-site Proton acceptor is the Lys-179.

Belongs to the class I-like SAM-binding methyltransferase superfamily. RNA methyltransferase RlmE family.

It is found in the cytoplasm. It carries out the reaction uridine(2552) in 23S rRNA + S-adenosyl-L-methionine = 2'-O-methyluridine(2552) in 23S rRNA + S-adenosyl-L-homocysteine + H(+). In terms of biological role, specifically methylates the uridine in position 2552 of 23S rRNA at the 2'-O position of the ribose in the fully assembled 50S ribosomal subunit. The sequence is that of Ribosomal RNA large subunit methyltransferase E from Afipia carboxidovorans (strain ATCC 49405 / DSM 1227 / KCTC 32145 / OM5) (Oligotropha carboxidovorans).